Consider the following 132-residue polypeptide: Small ribosomal subunit protein uS8c (132 aa).

The protein belongs to the universal ribosomal protein uS8 family. Part of the 30S ribosomal subunit.

It localises to the plastid. Its subcellular location is the chloroplast. Functionally, one of the primary rRNA binding proteins, it binds directly to 16S rRNA central domain where it helps coordinate assembly of the platform of the 30S subunit. In Illicium oligandrum (Star anise), this protein is Small ribosomal subunit protein uS8c (rps8).